Here is a 310-residue protein sequence, read N- to C-terminus: HPr kinase/phosphorylase (310 aa).

Active-site residues include H138 and K159. 153–160 (GASGIGKS) is a binding site for ATP. Mg(2+) is bound at residue S160. Catalysis depends on D177, which acts as the Proton acceptor; for phosphorylation activity. Proton donor; for dephosphorylation activity. An important for the catalytic mechanism of both phosphorylation and dephosphorylation region spans residues 201–210 (IEIRGVGIID). E202 is a binding site for Mg(2+). The active site involves R243. The important for the catalytic mechanism of dephosphorylation stretch occupies residues 264 to 269 (PVKTGR).

It belongs to the HPrK/P family. As to quaternary structure, homohexamer. Mg(2+) is required as a cofactor.

The enzyme catalyses [HPr protein]-L-serine + ATP = [HPr protein]-O-phospho-L-serine + ADP + H(+). It catalyses the reaction [HPr protein]-O-phospho-L-serine + phosphate + H(+) = [HPr protein]-L-serine + diphosphate. In terms of biological role, catalyzes the ATP- as well as the pyrophosphate-dependent phosphorylation of a specific serine residue in HPr, a phosphocarrier protein of the phosphoenolpyruvate-dependent sugar phosphotransferase system (PTS). HprK/P also catalyzes the pyrophosphate-producing, inorganic phosphate-dependent dephosphorylation (phosphorolysis) of seryl-phosphorylated HPr (P-Ser-HPr). The two antagonistic activities of HprK/P are regulated by several intracellular metabolites, which change their concentration in response to the absence or presence of rapidly metabolisable carbon sources (glucose, fructose, etc.) in the growth medium. Therefore, by controlling the phosphorylation state of HPr, HPrK/P is a sensor enzyme that plays a major role in the regulation of carbon metabolism and sugar transport: it mediates carbon catabolite repression (CCR), and regulates PTS-catalyzed carbohydrate uptake and inducer exclusion. This chain is HPr kinase/phosphorylase, found in Lactococcus lactis subsp. cremoris (strain SK11).